A 240-amino-acid polypeptide reads, in one-letter code: MASLRLATLAMMVLFGSCRAGATVFTLVNKCSYTVWPGTLSGSGSSVLGEGGFTLAPGQSVPLTASSRWSGRFWGRTDCSFDASGKGSCITGDCGNVLNCAQAGGTPPVSLAEFTLGDKDFYDVSLVDGYNVPLSIAAVGGTGDCRTAGCVSDLRTSCPAELSVTSNGQVIACKSACAAFSTPEYCCTGDHGSPQTCSPSKYSQVFKSACPTAYSYAYDDATSTFTCSNADYTITFCPSS.

A signal peptide spans 1 to 20 (MASLRLATLAMMVLFGSCRA). Cystine bridges form between Cys-31-Cys-237, Cys-79-Cys-89, Cys-94-Cys-100, Cys-145-Cys-227, Cys-150-Cys-210, Cys-158-Cys-173, Cys-177-Cys-186, and Cys-187-Cys-197.

This sequence belongs to the thaumatin family. Strongly expressed in pollen grains. Also present at weak levels in seedling roots, in sapling stems and in developing male strobili.

In terms of biological role, may be involved in disease resistance. This chain is Pathogenesis-related thaumatin-like protein 3.5, found in Cryptomeria japonica (Japanese cedar).